Reading from the N-terminus, the 786-residue chain is MQTIRILPNIRALLRDGRESEAIDVINAHVDVVAPHIKDDLRYIKSSDPKTSLCLSKIYFVLEDYQQAIEYALRAGDLLVDDGSFYYTSIVYHMMDSADIGGDDRIRDFVLKVIGAEDVDDSLIGYLFSIKAYGLLKEALVKYISDGNDCRRLLDLLISLGEEEGCLKEIYGMLAEIGPGKKPFIFYVIDAYFYLEDVEKVKALIERLVKEDILLCYDVAFYTEDNYSPEIEVADQRVMSILSGEFKKKILGAFLLEKNLTSFKFLESIARTRTHYLGLANSLMNLGTSNDTLYRNNADIFGQSSEWAKFSEVASIGMIHLFNSNPYEILKNYLPSEVSQKEGGALMALGLIKAGTFSEEDTEYLLYFLDTEDTLTPELAYGVCLGLGLINMGSANREILNKLKELSKVDRTLLVEASVYGMGMLGLNSWSVELLEDLRTIAGETEFERVKRAVGISFSLVLMFSEEMFYDECNASNGDFKNYINELLYDKDSIMRANGVLSLGSAFVGTGRLGVISTLLPYINDGDDDVKRAAVIAIGLVCCDDRDLLVGTLEPLSENHNFFVRAAVAVVLGLFLSGTGDKVCTNILEALMYDTNSLVRQSACIGVGFITMQCNPELVPNYKRIIEKLNRLIVDKKESGAVELGAVLGRGLSEGGGRNIVFSVRNMSGITSADRIAGAVLFLHYWYWHPLISMVSLCALPTTVFCFNEDLEEEEIEIPTSSRYNNLLICLPDIKKARRFKQKPKEDKEIVIESPSVLTFGSRCTIKQREECGIDAPAILFVKKKK.

7 PC repeats span residues 311 to 343 (SEVA…QKEG), 344 to 377 (GALM…TLTP), 382 to 416 (GVCL…LLVE), 417 to 451 (ASVY…ERVK), 498 to 532 (NGVL…DVKR), 533 to 566 (AAVI…FVRA), and 567 to 601 (AVAV…LVRQ).

Belongs to the proteasome subunit S1 family. The 26S proteasome consists of a 20S proteasome core and two 19S regulatory subunits. The 20S proteasome core is composed of 28 subunits that are arranged in four stacked rings, resulting in a barrel-shaped structure. The two end rings are each formed by seven alpha subunits, and the two central rings are each formed by seven beta subunits. The catalytic chamber with the active sites is on the inside of the barrel.

It localises to the cytoplasm. The protein localises to the nucleus. In terms of biological role, acts as a regulatory subunit of the 26S proteasome which degrades poly-ubiquitinated proteins in the cytoplasm and in the nucleus. It is essential for the regulated turnover of proteins and for the removal of misfolded proteins. The proteasome is a multicatalytic proteinase complex that is characterized by its ability to cleave peptides with Arg, Phe, Tyr, Leu, and Glu adjacent to the leaving group at neutral or slightly basic pH. The protein is 26S proteasome regulatory subunit RPN2 (RPN2) of Encephalitozoon cuniculi (strain GB-M1) (Microsporidian parasite).